The chain runs to 25 residues: Aggression-stimulating peptide (25 aa).

As to expression, expressed by the skin glands of male frogs.

The protein localises to the secreted. Its function is as follows. Stimulates aggressive behavior in male frogs. No effect on female frogs. The polypeptide is Aggression-stimulating peptide (Leptodactylus fallax (Mountain chicken frog)).